The primary structure comprises 268 residues: Tryptophan synthase alpha chain (268 aa).

Residues glutamate 49 and aspartate 60 each act as proton acceptor in the active site.

This sequence belongs to the TrpA family. As to quaternary structure, tetramer of two alpha and two beta chains.

It carries out the reaction (1S,2R)-1-C-(indol-3-yl)glycerol 3-phosphate + L-serine = D-glyceraldehyde 3-phosphate + L-tryptophan + H2O. The protein operates within amino-acid biosynthesis; L-tryptophan biosynthesis; L-tryptophan from chorismate: step 5/5. Its function is as follows. The alpha subunit is responsible for the aldol cleavage of indoleglycerol phosphate to indole and glyceraldehyde 3-phosphate. This is Tryptophan synthase alpha chain from Shigella boydii serotype 18 (strain CDC 3083-94 / BS512).